The chain runs to 355 residues: Alanine racemase (355 aa).

Lysine 34 serves as the catalytic Proton acceptor; specific for D-alanine. Lysine 34 is modified (N6-(pyridoxal phosphate)lysine). Residue arginine 133 coordinates substrate. Residue tyrosine 249 is the Proton acceptor; specific for L-alanine of the active site. Methionine 297 is a binding site for substrate.

This sequence belongs to the alanine racemase family. It depends on pyridoxal 5'-phosphate as a cofactor.

The catalysed reaction is L-alanine = D-alanine. It functions in the pathway amino-acid biosynthesis; D-alanine biosynthesis; D-alanine from L-alanine: step 1/1. In terms of biological role, catalyzes the interconversion of L-alanine and D-alanine. May also act on other amino acids. This Rickettsia rickettsii (strain Sheila Smith) protein is Alanine racemase (alr).